The chain runs to 572 residues: Phosphoenolpyruvate-protein phosphotransferase (572 aa).

His-191 (tele-phosphohistidine intermediate) is an active-site residue. Phosphoenolpyruvate contacts are provided by Arg-298 and Arg-334. Residues Glu-433 and Asp-457 each coordinate Mg(2+). Residues 456-457 and Arg-467 each bind phosphoenolpyruvate; that span reads ND. The active-site Proton donor is Cys-504.

This sequence belongs to the PEP-utilizing enzyme family. Homodimer. Mg(2+) serves as cofactor.

It localises to the cytoplasm. The catalysed reaction is L-histidyl-[protein] + phosphoenolpyruvate = N(pros)-phospho-L-histidyl-[protein] + pyruvate. Its function is as follows. General (non sugar-specific) component of the phosphoenolpyruvate-dependent sugar phosphotransferase system (sugar PTS). This major carbohydrate active-transport system catalyzes the phosphorylation of incoming sugar substrates concomitantly with their translocation across the cell membrane. Enzyme I transfers the phosphoryl group from phosphoenolpyruvate (PEP) to the phosphoryl carrier protein (HPr). This chain is Phosphoenolpyruvate-protein phosphotransferase (ptsI), found in Staphylococcus aureus (strain MRSA252).